A 926-amino-acid chain; its full sequence is Glycogenin (926 aa).

UDP is bound by residues Leu-10, Thr-12, Tyr-16, and Arg-85. Positions 10, 12, 16, 85, 94, 111, 112, 113, 145, 146, 184, 187, and 188 each coordinate UDP-alpha-D-glucose. The UDP site is built by Asp-111, Ala-112, and Asp-113. Asp-111 contacts Mn(2+). A Mn(2+)-binding site is contributed by Asp-113. A glycan (O-linked (Glc...) tyrosine) is linked at Tyr-219. Residues His-236, Gly-239, and Lys-242 each coordinate UDP. His-236 is a Mn(2+) binding site. Residues Gly-239 and Lys-242 each contribute to the UDP-alpha-D-glucose site. Disordered stretches follow at residues 379 to 432 (PSVS…PEMS), 452 to 476 (YYAHPESHRPATEHKEPEYPTLPKE), 547 to 584 (SIQNPTPPHPAHSQHQSHATGMGMAGQAPKSPSPPPRH), 611 to 749 (MSGK…ETVQ), and 768 to 903 (LPHA…PNTD). Over residues 386 to 402 (LTPPPADAAPAPAPAPV) the composition is skewed to pro residues. Residues 404 to 413 (TQTEQKTAQP) show a composition bias toward polar residues. Residues 456–469 (PESHRPATEHKEPE) are compositionally biased toward basic and acidic residues. Low complexity predominate over residues 557–566 (AHSQHQSHAT). Over residues 655–683 (SLHSLQSVPGTPRTQYSTFGKSPRLTNAR) the composition is skewed to polar residues. Over residues 692-704 (EQPEDSADGDDEN) the composition is skewed to acidic residues. A compositionally biased stretch (basic and acidic residues) spans 733 to 745 (DRWAQTDRVKTVD). Over residues 788 to 798 (SGNGRAGGGGQ) the composition is skewed to gly residues. Positions 800–812 (EAQTQHQSTYYEY) are enriched in polar residues. Low complexity-rich tracts occupy residues 813 to 824 (QQQHPHSQQSRQ) and 851 to 875 (HAQGLAQAQAQAHGQPQGQGANPNL).

This sequence belongs to the glycosyltransferase 8 family. Glycogenin subfamily. It depends on Mn(2+) as a cofactor.

It localises to the cytoplasm. The protein localises to the vacuole. The catalysed reaction is L-tyrosyl-[glycogenin] + UDP-alpha-D-glucose = alpha-D-glucosyl-L-tyrosyl-[glycogenin] + UDP + H(+). It carries out the reaction [1,4-alpha-D-glucosyl](n)-L-tyrosyl-[glycogenin] + UDP-alpha-D-glucose = [1,4-alpha-D-glucosyl](n+1)-L-tyrosyl-[glycogenin] + UDP + H(+). Functionally, self-glucosylating initiator of glycogen synthesis. It catalyzes the formation of a short alpha (1,4)-glucosyl chain covalently attached via a glucose 1-O-tyrosyl linkage to internal tyrosine residues and these chains act as primers for the elongation reaction catalyzed by glycogen synthase. This chain is Glycogenin, found in Cryptococcus neoformans var. grubii serotype A (strain H99 / ATCC 208821 / CBS 10515 / FGSC 9487) (Filobasidiella neoformans var. grubii).